We begin with the raw amino-acid sequence, 376 residues long: uncharacterized protein (376 aa).

Residues 82 to 372 form the Peptidase M14 domain; that stretch reads KIYDDSAVEK…ATSGILWRAL (291 aa). Positions 138, 141, and 283 each coordinate Zn(2+). The active-site Proton donor/acceptor is the Glu-344.

This sequence belongs to the peptidase M14 family. It depends on Zn(2+) as a cofactor.

This is an uncharacterized protein from Bacillus subtilis (strain 168).